We begin with the raw amino-acid sequence, 467 residues long: Glutamate--tRNA ligase (467 aa).

Residues 9 to 19 carry the 'HIGH' region motif; the sequence is PSPTGYLHIGG. Residues 237 to 241 carry the 'KMSKS' region motif; that stretch reads KLSKR. Lys240 lines the ATP pocket.

It belongs to the class-I aminoacyl-tRNA synthetase family. Glutamate--tRNA ligase type 1 subfamily. As to quaternary structure, monomer.

The protein resides in the cytoplasm. It carries out the reaction tRNA(Glu) + L-glutamate + ATP = L-glutamyl-tRNA(Glu) + AMP + diphosphate. Catalyzes the attachment of glutamate to tRNA(Glu) in a two-step reaction: glutamate is first activated by ATP to form Glu-AMP and then transferred to the acceptor end of tRNA(Glu). In Xanthomonas euvesicatoria pv. vesicatoria (strain 85-10) (Xanthomonas campestris pv. vesicatoria), this protein is Glutamate--tRNA ligase.